We begin with the raw amino-acid sequence, 224 residues long: Probable Brix domain-containing ribosomal biogenesis protein (224 aa).

In terms of domain architecture, Brix spans 1–196 (MMLITTSHRP…IWIMEDGRRW (196 aa)).

Probably involved in the biogenesis of the ribosome. The sequence is that of Probable Brix domain-containing ribosomal biogenesis protein from Pyrococcus abyssi (strain GE5 / Orsay).